We begin with the raw amino-acid sequence, 240 residues long: T-cell antigen CD7 (240 aa).

The first 25 residues, 1–25 (MAGPPRLLLLPLLLALARGLPGALA), serve as a signal peptide directing secretion. One can recognise an Ig-like domain in the interval 26–130 (AQEVQQSPHC…NVYGSGTLVL (105 aa)). Over 26 to 180 (AQEVQQSPHC…PDPPAASALP (155 aa)) the chain is Extracellular. Intrachain disulfides connect C35/C142 and C48/C114. N-linked (GlcNAc...) asparagine glycosylation is found at N45 and N96. The segment at 140–172 (HRCSDAPPRASALPAPPTGSALPDPQTASALPD) is disordered. Repeat copies occupy residues 145–153 (APPRASALP), 154–162 (APPTGSALP), 163–171 (DPQTASALP), and 172–180 (DPPAASALP). The 4 X 9 AA tandem repeats, potential spacer function stretch occupies residues 145–180 (APPRASALPAPPTGSALPDPQTASALPDPPAASALP). The chain crosses the membrane as a helical span at residues 181-201 (AALAVISFLLGLGLGVACVLA). C198 is lipidated: S-palmitoyl cysteine. At 202-240 (RTQIKKLCSWRDKNSAACVVYEDMSHSRCNTLSSPNQYQ) the chain is on the cytoplasmic side.

Interacts with SECTM1. In terms of tissue distribution, expressed on T-cells and natural killer (NK) cells and their precursors.

It localises to the membrane. Transmembrane glycoprotein expressed by T-cells and natural killer (NK) cells and their precursors. Plays a costimulatory role in T-cell activation upon binding to its ligand K12/SECTM1. In turn, mediates the production of cytokines such as IL-2. On resting NK-cells, CD7 activation results in a significant induction of interferon-gamma levels. The protein is T-cell antigen CD7 (CD7) of Homo sapiens (Human).